The chain runs to 1705 residues: Alpha-protein kinase 3 (1705 aa).

The segment covering M1–G10 has biased composition (low complexity). Residues M1–S33 form a disordered region. Residues W11–G21 show a composition bias toward gly residues. The Ig-like 1 domain occupies P77–E168. A compositionally biased stretch (basic and acidic residues) spans D211–F221. Disordered regions lie at residues D211–G244, L308–A749, G792–G845, G1082–G1145, and R1173–V1226. S228 bears the Phosphoserine mark. Residues L308–S342 are compositionally biased toward basic and acidic residues. A compositionally biased stretch (low complexity) spans P370–G382. Over residues D495–Q504 the composition is skewed to polar residues. The span at T557–S579 shows a compositional bias: low complexity. Over residues T598 to N609 the composition is skewed to polar residues. Residues E647–A657 show a composition bias toward basic and acidic residues. Residues R666–A676 show a composition bias toward polar residues. Residues K679–G700 show a composition bias toward basic and acidic residues. Over residues K708–A729 the composition is skewed to polar residues. Residues S736–A745 are compositionally biased toward pro residues. Over residues A829–P844 the composition is skewed to basic and acidic residues. A compositionally biased stretch (low complexity) spans G1120–E1131. S1222 carries the post-translational modification Phosphoserine. The region spanning P1274–S1362 is the Ig-like 2 domain. The cysteines at positions 1296 and 1346 are disulfide-linked. Residues K1390–L1625 form the Alpha-type protein kinase domain. The segment at P1628 to R1705 is disordered. The span at P1664 to E1696 shows a compositional bias: polar residues.

It belongs to the protein kinase superfamily. Alpha-type protein kinase family. ALPK subfamily.

The protein localises to the nucleus. It catalyses the reaction L-seryl-[protein] + ATP = O-phospho-L-seryl-[protein] + ADP + H(+). It carries out the reaction L-threonyl-[protein] + ATP = O-phospho-L-threonyl-[protein] + ADP + H(+). Involved in cardiomyocyte differentiation. The chain is Alpha-protein kinase 3 from Homo sapiens (Human).